The sequence spans 304 residues: Acetaldehyde dehydrogenase 1 (304 aa).

C131 (acyl-thioester intermediate) is an active-site residue. NAD(+) is bound by residues 162 to 170 and N273; that span reads SAGPGTRKN.

This sequence belongs to the acetaldehyde dehydrogenase family.

It catalyses the reaction acetaldehyde + NAD(+) + CoA = acetyl-CoA + NADH + H(+). This chain is Acetaldehyde dehydrogenase 1, found in Dechloromonas aromatica (strain RCB).